The chain runs to 405 residues: Type III polyketide synthase 10 (405 aa).

The span at 1 to 18 shows a compositional bias: polar residues; sequence MVSTNAGGIASKQASSMA. A disordered region spans residues 1 to 20; that stretch reads MVSTNAGGIASKQASSMAPN. Cys-170 acts as the Nucleophile in catalysis.

This sequence belongs to the thiolase-like superfamily. Chalcone/stilbene synthases family. In terms of assembly, interacts with STS1. In terms of tissue distribution, expressed in adult flowers.

It is found in the endoplasmic reticulum. Plant type III polyketide synthases (PKSs) that catalyzes the condensation of fatty acyl-CoA with malonyl-CoA to generate triketide and tetraketide alpha-pyrones, the main components of pollen exine and potential sporopollenin precursors. May be involved in the synthesis of sporopollenin precursors in tapetal cells to regulate pollen wall formation. Required for exine and Ubisch body formation in anthers. Does not possess chalcone synthase (CHS) activity in vitro with the substrates 4-coumaroyl-CoA and malonyl-CoA. This is Type III polyketide synthase 10 from Oryza sativa subsp. japonica (Rice).